Reading from the N-terminus, the 294-residue chain is Probable endonuclease 4 (294 aa).

Positions 78, 118, 155, 189, 192, 226, 239, 241, and 271 each coordinate Zn(2+).

It belongs to the AP endonuclease 2 family. Requires Zn(2+) as cofactor.

It carries out the reaction Endonucleolytic cleavage to 5'-phosphooligonucleotide end-products.. Endonuclease IV plays a role in DNA repair. It cleaves phosphodiester bonds at apurinic or apyrimidinic (AP) sites, generating a 3'-hydroxyl group and a 5'-terminal sugar phosphate. In Oleidesulfovibrio alaskensis (strain ATCC BAA-1058 / DSM 17464 / G20) (Desulfovibrio alaskensis), this protein is Probable endonuclease 4.